We begin with the raw amino-acid sequence, 276 residues long: Vitamin B12-binding protein (276 aa).

The first 20 residues, 1–20, serve as a signal peptide directing secretion; sequence MLVIRLIACTFLFITPSLLA. The Fe/B12 periplasmic-binding domain maps to 27-274; the sequence is RIISLAPHAT…QVCTYLKIAQ (248 aa). Y54 serves as a coordination point for cyanocob(III)alamin. Residues C187 and C267 are joined by a disulfide bond.

The protein belongs to the BtuF family. In terms of assembly, the complex is composed of two ATP-binding proteins (BtuD), two transmembrane proteins (BtuC) and a solute-binding protein (BtuF).

The protein localises to the periplasm. Its function is as follows. Part of the ABC transporter complex BtuCDF involved in vitamin B12 import. Binds vitamin B12 and delivers it to the periplasmic surface of BtuC. This is Vitamin B12-binding protein from Vibrio cholerae serotype O1 (strain ATCC 39541 / Classical Ogawa 395 / O395).